A 337-amino-acid polypeptide reads, in one-letter code: Inner membrane protein YhjD (337 aa).

The segment covering 1–29 has biased composition (basic and acidic residues); the sequence is MTQENEIKRPIQDLEHEPIKPLDNSEKGS. The segment at 1–31 is disordered; sequence MTQENEIKRPIQDLEHEPIKPLDNSEKGSKV. Over 1–74 the chain is Cytoplasmic; it reads MTQENEIKRP…LGNQFGAAIT (74 aa). The helical transmembrane segment at 75-97 threads the bilayer; that stretch reads YFSFLSMIPILMVSFAAGGFVLA. Over 98-133 the chain is Periplasmic; the sequence is SHPMLLQDIFDKILQNISDPTLAATLKNTINTAVQQ. The chain crosses the membrane as a helical span at residues 134-156; it reads RTTVGLVGLAVALYSGINWMGNL. Over 157 to 185 the chain is Cytoplasmic; that stretch reads REAIRAQSRDVWERSPQDQEKFWVKYLRD. The chain crosses the membrane as a helical span at residues 186 to 208; the sequence is FISLIGLLIALIVTLSITSVAGS. Residues 209–227 lie on the Periplasmic side of the membrane; sequence AQQMIISALHLNSIEWLKP. Residues 228 to 250 form a helical membrane-spanning segment; sequence TWRLIGLAISIFANYLLFFWIFW. Residues 251-261 lie on the Cytoplasmic side of the membrane; that stretch reads RLPRHRPRKKA. Residues 262 to 284 traverse the membrane as a helical segment; sequence LIRGTFLAAIGFEVIKIVMTYTL. Residues 285–298 are Periplasmic-facing; sequence PSLMKSPSGAAFGS. The chain crosses the membrane as a helical span at residues 299–321; the sequence is VLGLMAFFYFFARLTLFCAAWIA. At 322-337 the chain is on the cytoplasmic side; the sequence is TAEYKDDPRMPGKTQP.

Its subcellular location is the cell inner membrane. This is Inner membrane protein YhjD (yhjD) from Escherichia coli (strain K12).